The sequence spans 391 residues: S-adenosylmethionine synthase (391 aa).

Histidine 19 contributes to the ATP binding site. Aspartate 21 contributes to the Mg(2+) binding site. Position 47 (glutamate 47) interacts with K(+). The L-methionine site is built by glutamate 60 and glutamine 103. A flexible loop region spans residues 103–113 (QSPDIAQGVDR). Residues 168-170 (DGK), 236-237 (RF), aspartate 245, 251-252 (RK), alanine 268, and lysine 272 contribute to the ATP site. Residue aspartate 245 coordinates L-methionine. Lysine 276 contributes to the L-methionine binding site.

Belongs to the AdoMet synthase family. Homotetramer; dimer of dimers. Mg(2+) is required as a cofactor. It depends on K(+) as a cofactor.

It localises to the cytoplasm. It catalyses the reaction L-methionine + ATP + H2O = S-adenosyl-L-methionine + phosphate + diphosphate. It functions in the pathway amino-acid biosynthesis; S-adenosyl-L-methionine biosynthesis; S-adenosyl-L-methionine from L-methionine: step 1/1. In terms of biological role, catalyzes the formation of S-adenosylmethionine (AdoMet) from methionine and ATP. The overall synthetic reaction is composed of two sequential steps, AdoMet formation and the subsequent tripolyphosphate hydrolysis which occurs prior to release of AdoMet from the enzyme. The chain is S-adenosylmethionine synthase from Oleidesulfovibrio alaskensis (strain ATCC BAA-1058 / DSM 17464 / G20) (Desulfovibrio alaskensis).